The primary structure comprises 427 residues: GTPase Obg (427 aa).

The region spanning 1-158 (MFVDIAKIYV…LWVILELKVL (158 aa)) is the Obg domain. Residues 159-330 (ADVGLIGYPN…VLKRAYELLK (172 aa)) enclose the OBG-type G domain. GTP-binding positions include 165-172 (GYPNVGKS), 190-194 (FTTKY), 212-215 (DIPG), 282-285 (NKMD), and 311-313 (SAA). Positions 172 and 192 each coordinate Mg(2+). An OCT domain is found at 347–427 (FVYYKKKDVK…ILDVEFEYYE (81 aa)).

It belongs to the TRAFAC class OBG-HflX-like GTPase superfamily. OBG GTPase family. As to quaternary structure, monomer. The cofactor is Mg(2+).

It localises to the cytoplasm. Functionally, an essential GTPase which binds GTP, GDP and possibly (p)ppGpp with moderate affinity, with high nucleotide exchange rates and a fairly low GTP hydrolysis rate. Plays a role in control of the cell cycle, stress response, ribosome biogenesis and in those bacteria that undergo differentiation, in morphogenesis control. In Caldicellulosiruptor saccharolyticus (strain ATCC 43494 / DSM 8903 / Tp8T 6331), this protein is GTPase Obg.